The chain runs to 149 residues: Deoxyuridine 5'-triphosphate nucleotidohydrolase (149 aa).

Substrate contacts are provided by residues 68 to 70 (RSG), asparagine 81, and 85 to 87 (LID).

It belongs to the dUTPase family. Mg(2+) serves as cofactor.

It catalyses the reaction dUTP + H2O = dUMP + diphosphate + H(+). It participates in pyrimidine metabolism; dUMP biosynthesis; dUMP from dCTP (dUTP route): step 2/2. This enzyme is involved in nucleotide metabolism: it produces dUMP, the immediate precursor of thymidine nucleotides and it decreases the intracellular concentration of dUTP so that uracil cannot be incorporated into DNA. This is Deoxyuridine 5'-triphosphate nucleotidohydrolase from Nitrosomonas eutropha (strain DSM 101675 / C91 / Nm57).